We begin with the raw amino-acid sequence, 447 residues long: MNSYQTNTATSWGRNHIPTLLDNLTTAAMFMFCPFIILVFYLITYGEYLGSIGDFYLDIINGDWQTIWSNIPSFKINVLGACLLWIVFQLILSKLPDTIHRFVPHYVGGIKAGHITPAGNLVYYNINGLQAFIITHVLVIMSCYYGLFSPTIIMDNWGSIFWSVNIIGYLITFLAYFKALTFSSHPSDNKFTGKLFYDIVMGIEFNPEIFGTDLKLFFNGRPGIIAWNLINLSCAMKQYENFGYVSNSMILVIILQLIYIVDFFYNENWYVHTVDIAHDHFGWMLAWGDTVWLPFGYTLQAGYLMNNPIDLSTGFFNLVFVMGIIGYIIFRTANYQKDKYRSNTQGVKYIPCTYQTADGLNRASKLIYSGLWGVSRHMNYTGDIILSTAYCLACGFSHFIPYFYCVYMTILLVTRCLRDEQRCSRKYGKYWKMYTKRVPYRFIPGIY.

8 consecutive transmembrane segments (helical) span residues L24–T44, I71–I91, F102–Y124, I133–I153, W157–F177, Y244–F264, F281–A301, and I309–I329. Residues K337, R341, I367, W372, and N379–Y380 contribute to the NADP(+) site. A helical transmembrane segment spans residues A393–V413. NADP(+) contacts are provided by residues D419, C423 to Y427, and Y434.

This sequence belongs to the ERG4/ERG24 family.

It is found in the membrane. It catalyses the reaction cholesterol + NADP(+) = 7-dehydrocholesterol + NADPH + H(+). It participates in steroid biosynthesis; cholesterol biosynthesis. Functionally, catalyzes the last step of the cholesterol synthesis pathway, which transforms cholesta-5,7-dien-3beta-ol (7-dehydrocholesterol,7-DHC) into cholesterol by reducing the C7-C8 double bond of its sterol core. The polypeptide is Probable 7-dehydrocholesterol reductase (DHCR7) (Acanthamoeba polyphaga (Amoeba)).